The primary structure comprises 303 residues: tRNA dimethylallyltransferase (303 aa).

13–20 (GPTASGKS) serves as a coordination point for ATP. 15–20 (TASGKS) is a binding site for substrate. 2 interaction with substrate tRNA regions span residues 38–41 (DSMQ) and 162–166 (QRLLR).

This sequence belongs to the IPP transferase family. As to quaternary structure, monomer. It depends on Mg(2+) as a cofactor.

The enzyme catalyses adenosine(37) in tRNA + dimethylallyl diphosphate = N(6)-dimethylallyladenosine(37) in tRNA + diphosphate. In terms of biological role, catalyzes the transfer of a dimethylallyl group onto the adenine at position 37 in tRNAs that read codons beginning with uridine, leading to the formation of N6-(dimethylallyl)adenosine (i(6)A). This Methylocella silvestris (strain DSM 15510 / CIP 108128 / LMG 27833 / NCIMB 13906 / BL2) protein is tRNA dimethylallyltransferase.